The chain runs to 715 residues: Fatty acid oxidation complex subunit alpha (715 aa).

Residues 1–190 (MTTTSAFMLN…KAGLVDDVVP (190 aa)) are enoyl-CoA hydratase. Residues 306 to 715 (GPLNSVGILG…WTNGETDQGN (410 aa)) are 3-hydroxyacyl-CoA dehydrogenase.

It in the N-terminal section; belongs to the enoyl-CoA hydratase/isomerase family. In the central section; belongs to the 3-hydroxyacyl-CoA dehydrogenase family. Heterotetramer of two alpha chains (FadJ) and two beta chains (FadI).

The protein localises to the cytoplasm. It catalyses the reaction a (3S)-3-hydroxyacyl-CoA = a (2E)-enoyl-CoA + H2O. It carries out the reaction a 4-saturated-(3S)-3-hydroxyacyl-CoA = a (3E)-enoyl-CoA + H2O. The catalysed reaction is a (3S)-3-hydroxyacyl-CoA + NAD(+) = a 3-oxoacyl-CoA + NADH + H(+). The enzyme catalyses (3S)-3-hydroxybutanoyl-CoA = (3R)-3-hydroxybutanoyl-CoA. The protein operates within lipid metabolism; fatty acid beta-oxidation. Functionally, catalyzes the formation of a hydroxyacyl-CoA by addition of water on enoyl-CoA. Also exhibits 3-hydroxyacyl-CoA epimerase and 3-hydroxyacyl-CoA dehydrogenase activities. The protein is Fatty acid oxidation complex subunit alpha of Salmonella dublin (strain CT_02021853).